The following is a 464-amino-acid chain: Fumarate hydratase class II (464 aa).

Substrate-binding positions include 97–99 (SGT), 128–131 (HPND), 138–140 (SSN), and Thr186. His187 serves as the catalytic Proton donor/acceptor. The active site involves Ser317. Substrate-binding positions include Ser318 and 323–325 (KVN).

Belongs to the class-II fumarase/aspartase family. Fumarase subfamily. In terms of assembly, homotetramer.

The protein resides in the cytoplasm. The catalysed reaction is (S)-malate = fumarate + H2O. It participates in carbohydrate metabolism; tricarboxylic acid cycle; (S)-malate from fumarate: step 1/1. Its function is as follows. Involved in the TCA cycle. Catalyzes the stereospecific interconversion of fumarate to L-malate. The protein is Fumarate hydratase class II of Leptospira interrogans serogroup Icterohaemorrhagiae serovar copenhageni (strain Fiocruz L1-130).